A 502-amino-acid chain; its full sequence is Lysine--tRNA ligase (502 aa).

Mg(2+) is bound by residues Glu-398 and Glu-405.

This sequence belongs to the class-II aminoacyl-tRNA synthetase family. As to quaternary structure, homodimer. Mg(2+) serves as cofactor.

It localises to the cytoplasm. The catalysed reaction is tRNA(Lys) + L-lysine + ATP = L-lysyl-tRNA(Lys) + AMP + diphosphate. In Thermotoga sp. (strain RQ2), this protein is Lysine--tRNA ligase.